Here is a 589-residue protein sequence, read N- to C-terminus: Progranulin (589 aa).

A signal peptide spans 1 to 17 (MWVLMSWLAFAAGLVAG). N38 is a glycosylation site (N-linked (GlcNAc...) asparagine). 2 disulfides stabilise this stretch: C125/C138 and C132/C148. N-linked (GlcNAc...) asparagine glycosylation occurs at N263. Cystine bridges form between C282–C294, C288–C304, C295–C312, C305–C319, C313–C326, C320–C333, C364–C376, C370–C386, C395–C408, and C402–C414. N-linked (GlcNAc...) asparagine glycosylation occurs at N373. N526 is a glycosylation site (N-linked (GlcNAc...) asparagine).

Belongs to the granulin family. Progranulin is secreted as a homodimer. Interacts with SLPI; interaction protects progranulin from proteolysis. Interacts (via region corresponding to granulin-7 peptide) with CTSD; stabilizes CTSD and increases its proteolytic activity. Interacts (via region corresponding to granulin-7 peptide) with SORT1; this interaction mediates endocytosis and lysosome delivery of progranulin; interaction occurs at the neuronal cell surface in a stressed nervous system. Interacts with PSAP; facilitates lysosomal delivery of progranulin from the extracellular space and the biosynthetic pathway. Forms a complex with PSAP and M6PR; PSAP bridges the binding between progranulin and M6PR. Forms a complex with PSAP and SORT1; progranulin bridges the interaction between PSAP and SORT1; facilitates lysosomal targeting of PSAP via SORT1; interaction enhances PSAP uptake in primary cortical neurons. Interacts (via regions corresponding to granulin-2 and granulin-7 peptides) with GBA1; this interaction prevents aggregation of GBA1-SCARB2 complex via interaction with HSPA1A upon stress. Interacts (via region corresponding to granulin-7 peptide) with HSPA1A; mediates recruitment of HSPA1A to GBA1 and prevents GBA1 aggregation in response to stress. In terms of processing, N-glycosylated. Post-translationally, cleaved by ELANE; proteolysis is blocked by SLPI and is concentration- and time-dependent and induces CXCL8/IL-8 production; granulin-3 and granulin-4 are resistant to ELANE. Cleaved by CTSL in lysosome thus regulating the maturation and turnover of progranulin within the lysosome. Highly expressed at the wound site and diminishes away from the wound. Not expressed in fibroblasts and endothelial cells in intact skin. In adult brain, expressed primarily in neurons and in resting and reactive microglia. Expressed in both neurons and microglia. Highly expressed in activated microglia in response to injury. Expressed in macrophage.

Its subcellular location is the secreted. It localises to the lysosome. In terms of biological role, secreted protein that acts as a key regulator of lysosomal function and as a growth factor involved in inflammation, wound healing and cell proliferation. Regulates protein trafficking to lysosomes, and also the activity of lysosomal enzymes. Also facilitates the acidification of lysosomes, causing degradation of mature CTSD by CTSB. In addition, functions as a wound-related growth factor that acts directly on dermal fibroblasts and endothelial cells to promote division, migration and the formation of capillary-like tubule structures. Also promotes epithelial cell proliferation by blocking TNF-mediated neutrophil activation preventing release of oxidants and proteases. Moreover, modulates inflammation in neurons by preserving neurons survival, axonal outgrowth and neuronal integrity. Functionally, inhibits epithelial cell proliferation and induces epithelial cells to secrete IL-8. Stabilizes CTSD through interaction with CTSD leading to maintain its aspartic-type peptidase activity. The polypeptide is Progranulin (Grn) (Mus musculus (Mouse)).